Consider the following 329-residue polypeptide: Interleukin-12 subunit beta (329 aa).

The first 22 residues, 1–22 (MHPQQLVIAWLSLVLLAPPLMA), serve as a signal peptide directing secretion. An Ig-like C2-type domain is found at 23–106 (IWELEKNVYV…LSHSFLLIHK (84 aa)). Cysteines 50 and 90 form a disulfide. N-linked (GlcNAc...) asparagine glycosylation is found at N135 and N223. Residues 238–329 (PPKNLQLKPL…WSNWASVSCS (92 aa)) form the Fibronectin type-III domain.

This sequence belongs to the IL-12B family. As to quaternary structure, heterodimer with IL12A; disulfide-linked. The heterodimer is known as interleukin IL-12. Heterodimer with IL23A; disulfide-linked. The heterodimer is known as interleukin IL-23. Also secreted as a monomer. Interacts with NBR1; this interaction promotes IL-12 secretion.

It is found in the secreted. Cytokine that can act as a growth factor for activated T and NK cells, enhance the lytic activity of NK/lymphokine-activated killer cells, and stimulate the production of IFN-gamma by resting PBMC. In terms of biological role, associates with IL23A to form the IL-23 interleukin, a heterodimeric cytokine which functions in innate and adaptive immunity. IL-23 may constitute with IL-17 an acute response to infection in peripheral tissues. IL-23 binds to a heterodimeric receptor complex composed of IL12RB1 and IL23R, activates the Jak-Stat signaling cascade, stimulates memory rather than naive T-cells and promotes production of pro-inflammatory cytokines. IL-23 induces autoimmune inflammation and thus may be responsible for autoimmune inflammatory diseases and may be important for tumorigenesis. The polypeptide is Interleukin-12 subunit beta (IL12B) (Felis catus (Cat)).